A 126-amino-acid polypeptide reads, in one-letter code: Protein ApaG (126 aa).

Residues 2–126 form the ApaG domain; it reads SALDTSIRVE…FRLATPGLLH (125 aa).

This Shewanella sp. (strain W3-18-1) protein is Protein ApaG.